Here is an 873-residue protein sequence, read N- to C-terminus: Chitin synthase F (873 aa).

The tract at residues 1–105 (MEDAHDQSSR…KSGSGLRRYP (105 aa)) is disordered. Composition is skewed to polar residues over residues 33–46 (SYPS…SQSL), 58–72 (ISSQ…QNPS), and 80–98 (ESEV…TKSG). N-linked (GlcNAc...) asparagine glycosylation is present at Asn-506. The next 7 helical transmembrane spans lie at 532–554 (LVFL…FSLA), 588–608 (IVNN…FFLA), 621–641 (ILTF…SFYL), 672–692 (GLVL…SILY), 702–722 (SWAY…YAFC), 802–822 (LVLL…NDSV), and 841–861 (VILW…LWFL).

It belongs to the chitin synthase family. Class III subfamily.

Its subcellular location is the cell membrane. The catalysed reaction is [(1-&gt;4)-N-acetyl-beta-D-glucosaminyl](n) + UDP-N-acetyl-alpha-D-glucosamine = [(1-&gt;4)-N-acetyl-beta-D-glucosaminyl](n+1) + UDP + H(+). Polymerizes chitin, a structural polymer of the cell wall and septum, by transferring the sugar moiety of UDP-GlcNAc to the non-reducing end of the growing chitin polymer. Plays an important role in septal growth or maintenance. Mediates colony spore formation. The chain is Chitin synthase F from Aspergillus niger (strain ATCC MYA-4892 / CBS 513.88 / FGSC A1513).